Consider the following 1163-residue polypeptide: Genome polyprotein (1163 aa).

Residues 1–104 (MSGRKAQGKT…LSSRKRRSYE (104 aa)) lie on the Cytoplasmic side of the membrane. The tract at residues 38–72 (PGPSRGVQGFIFFFLFNVLTGRKITAHLKKLWRML) is hydrophobic; homodimerization of capsid protein C. The propeptide at 102 to 121 (SYEVLTVQFLILGMLLMTGG) is ER anchor for the capsid protein C, removed in mature form by serine protease NS3. Residues 105–125 (VLTVQFLILGMLLMTGGVTLV) traverse the membrane as a helical segment. The Extracellular portion of the chain corresponds to 126-244 (RKSRWLLLNV…GERQLQKIER (119 aa)). Residues Asn134 and Asn150 are each glycosylated (N-linked (GlcNAc...) asparagine; by host). Residues 245-265 (WLVRNPFFAVTALAIAYLVGS) traverse the membrane as a helical segment. At 266–270 (NMTQR) the chain is on the cytoplasmic side. A helical transmembrane segment spans residues 271–285 (VVIALLVLAVGPAYS). Topologically, residues 286–730 (AHCIGITDRD…MVFGSAFQGL (445 aa)) are extracellular. 6 cysteine pairs are disulfide-bonded: Cys288–Cys315, Cys345–Cys406, Cys359–Cys390, Cys377–Cys401, Cys467–Cys568, and Cys585–Cys615. The fusion peptide stretch occupies residues 383–396 (DRGWGNGCGLFGKG). The chain crosses the membrane as a helical span at residues 731-751 (FGGLSWITKVIMGAVLIWVGI). The Extracellular portion of the chain corresponds to 752–757 (NMRNMT). The chain crosses the membrane as a helical span at residues 758 to 778 (MSMSMILVGVIMMFLSLGVGA). The Extracellular segment spans residues 779–1163 (DQGCAINFGK…RQGPKQILVG (385 aa)). Disulfide bonds link Cys782/Cys793, Cys833/Cys921, Cys957/Cys1002, Cys1058/Cys1107, Cys1069/Cys1091, and Cys1090/Cys1094. 2 N-linked (GlcNAc...) asparagine; by host glycosylation sites follow: Asn908 and Asn986.

As to quaternary structure, homodimer. Interacts (via N-terminus) with host EXOC1 (via C-terminus); this interaction results in EXOC1 degradation through the proteasome degradation pathway. Forms heterodimers with envelope protein E in the endoplasmic reticulum and Golgi. In terms of assembly, homodimer; in the endoplasmic reticulum and Golgi. As to quaternary structure, homodimer; Homohexamer when secreted. Interacts with envelope protein E. Specific enzymatic cleavages in vivo yield mature proteins. The nascent capsid protein C contains a C-terminal hydrophobic domain that act as a signal sequence for translocation of prM into the lumen of the ER. Mature capsid protein C is cleaved at a site upstream of this hydrophobic domain by NS3. prM is cleaved in post-Golgi vesicles by a host furin, releasing the mature small envelope protein M, and peptide pr. Non-structural protein 2A-alpha, a C-terminally truncated form of non-structural protein 2A, results from partial cleavage by NS3. Specific enzymatic cleavages in vivo yield mature proteins peptide 2K acts as a signal sequence and is removed from the N-terminus of NS4B by the host signal peptidase in the ER lumen. Signal cleavage at the 2K-4B site requires a prior NS3 protease-mediated cleavage at the 4A-2K site. Post-translationally, cleaved in post-Golgi vesicles by a host furin, releasing the mature small envelope protein M, and peptide pr. This cleavage is incomplete as up to 30% of viral particles still carry uncleaved prM. In terms of processing, N-glycosylated. N-glycosylated. The excreted form is glycosylated and this is required for efficient secretion of the protein from infected cells.

The protein localises to the virion. Its subcellular location is the host nucleus. It localises to the host cytoplasm. The protein resides in the host perinuclear region. It is found in the secreted. The protein localises to the virion membrane. Its subcellular location is the host endoplasmic reticulum membrane. Plays a role in virus budding by binding to the cell membrane and gathering the viral RNA into a nucleocapsid that forms the core of a mature virus particle. During virus entry, may induce genome penetration into the host cytoplasm after hemifusion induced by the surface proteins. Can migrate to the cell nucleus where it modulates host functions. Its function is as follows. Inhibits RNA silencing by interfering with host Dicer. Functionally, prevents premature fusion activity of envelope proteins in trans-Golgi by binding to envelope protein E at pH6.0. After virion release in extracellular space, gets dissociated from E dimers. In terms of biological role, acts as a chaperone for envelope protein E during intracellular virion assembly by masking and inactivating envelope protein E fusion peptide. prM is the only viral peptide matured by host furin in the trans-Golgi network probably to avoid catastrophic activation of the viral fusion activity in acidic Golgi compartment prior to virion release. prM-E cleavage is inefficient, and many virions are only partially matured. These uncleaved prM would play a role in immune evasion. May play a role in virus budding. Exerts cytotoxic effects by activating a mitochondrial apoptotic pathway through M ectodomain. May display a viroporin activity. Its function is as follows. Binds to host cell surface receptor and mediates fusion between viral and cellular membranes. Envelope protein is synthesized in the endoplasmic reticulum in the form of heterodimer with protein prM. They play a role in virion budding in the ER, and the newly formed immature particle is covered with 60 spikes composed of heterodimer between precursor prM and envelope protein E. The virion is transported to the Golgi apparatus where the low pH causes dissociation of PrM-E heterodimers and formation of E homodimers. prM-E cleavage is inefficient, and many virions are only partially matured. These uncleaved prM would play a role in immune evasion. Functionally, involved in immune evasion, pathogenesis and viral replication. Once cleaved off the polyprotein, is targeted to three destinations: the viral replication cycle, the plasma membrane and the extracellular compartment. Essential for viral replication. Required for formation of the replication complex and recruitment of other non-structural proteins to the ER-derived membrane structures. Excreted as a hexameric lipoparticle that plays a role against host immune response. Antagonizing the complement function. Binds to the host macrophages and dendritic cells. Inhibits signal transduction originating from Toll-like receptor 3 (TLR3). In terms of biological role, component of the viral RNA replication complex that functions in virion assembly and antagonizes the host immune response. In Aedes aegypti (Yellowfever mosquito), this protein is Genome polyprotein.